The sequence spans 941 residues: Translation initiation factor IF-2 (941 aa).

Disordered stretches follow at residues 61-204 (IQSN…RREN) and 249-274 (QEKD…KNNK). A compositionally biased stretch (basic and acidic residues) spans 147 to 163 (EKAKQKLQEIQKSREAL). Residues 164-179 (NKLTQSNTNNANNANS) are compositionally biased toward low complexity. The segment covering 180 to 204 (AKKEISEVAKQEREQEHLDNKRREN) has biased composition (basic and acidic residues). The region spanning 440-609 (ERPPVVTIMG…LIQADIMELK (170 aa)) is the tr-type G domain. The segment at 449–456 (GHVDHGKT) is G1. 449-456 (GHVDHGKT) is a GTP binding site. Residues 474–478 (GITQH) form a G2 region. Residues 495–498 (DTPG) form a G3 region. Residues 495–499 (DTPGH) and 549–552 (NKMD) each bind GTP. The segment at 549–552 (NKMD) is G4. Residues 585-587 (SAK) form a G5 region.

The protein belongs to the TRAFAC class translation factor GTPase superfamily. Classic translation factor GTPase family. IF-2 subfamily.

The protein localises to the cytoplasm. Functionally, one of the essential components for the initiation of protein synthesis. Protects formylmethionyl-tRNA from spontaneous hydrolysis and promotes its binding to the 30S ribosomal subunits. Also involved in the hydrolysis of GTP during the formation of the 70S ribosomal complex. This is Translation initiation factor IF-2 from Helicobacter acinonychis (strain Sheeba).